A 124-amino-acid chain; its full sequence is Large ribosomal subunit protein bL12 (124 aa).

This sequence belongs to the bacterial ribosomal protein bL12 family. In terms of assembly, homodimer. Part of the ribosomal stalk of the 50S ribosomal subunit. Forms a multimeric L10(L12)X complex, where L10 forms an elongated spine to which 2 to 4 L12 dimers bind in a sequential fashion. Binds GTP-bound translation factors.

In terms of biological role, forms part of the ribosomal stalk which helps the ribosome interact with GTP-bound translation factors. Is thus essential for accurate translation. The polypeptide is Large ribosomal subunit protein bL12 (Borreliella afzelii (strain PKo) (Borrelia afzelii)).